A 53-amino-acid polypeptide reads, in one-letter code: Conotoxin Cal6.23 (53 aa).

A signal peptide spans 1–22; the sequence is MKLTAVLMVAVLVLTACQLITA. Disulfide bonds link C25/C40, C32/C47, and C39/C51.

Belongs to the conotoxin O1 superfamily. In terms of tissue distribution, expressed by the venom duct.

It localises to the secreted. Functionally, probable neurotoxin. This chain is Conotoxin Cal6.23, found in Californiconus californicus (California cone).